The chain runs to 212 residues: Sclerostin (212 aa).

A signal peptide spans 1–23; that stretch reads MQLSLALCLVCLLVHAAFRVVEG. N-linked (GlcNAc...) asparagine glycosylation is present at Asn52. 4 disulfides stabilise this stretch: Cys79–Cys133, Cys93–Cys147, Cys104–Cys164, and Cys108–Cys166. The CTCK domain maps to 81–171; the sequence is ELHFTRYVTD…ASCKCKRLTR (91 aa). Residue Asn174 is glycosylated (N-linked (GlcNAc...) asparagine). Residues 179–212 are disordered; it reads KDFGPEAARPQTGRKLRPRARGTKASRAELENAY. Residues 190-202 are compositionally biased toward basic residues; sequence TGRKLRPRARGTK.

This sequence belongs to the sclerostin family. As to quaternary structure, interacts with LRP4 (via the extracellular domain); the interaction facilitates the inhibition of Wnt signaling. Interacts with LRP5 (via the first two YWTD-EGF repeat domains); the interaction inhibits Wnt-mediated signaling. Interacts with LRP6.

Its subcellular location is the secreted. It is found in the extracellular space. It localises to the extracellular matrix. In terms of biological role, negative regulator of bone growth that acts through inhibition of Wnt signaling and bone formation. The protein is Sclerostin of Bos taurus (Bovine).